Consider the following 192-residue polypeptide: Phosphoheptose isomerase (192 aa).

The SIS domain maps to 37–192 (LADSFKAGGK…IQLIEKEMEK (156 aa)). Position 52-54 (52-54 (NGG)) interacts with substrate. Residues histidine 61 and glutamate 65 each contribute to the Zn(2+) site. Residues glutamate 65, 93-94 (ND), 119-121 (STS), serine 124, and glutamine 172 each bind substrate. Zn(2+)-binding residues include glutamine 172 and histidine 180.

Belongs to the SIS family. GmhA subfamily. Homotetramer. Requires Zn(2+) as cofactor.

It is found in the cytoplasm. It carries out the reaction 2 D-sedoheptulose 7-phosphate = D-glycero-alpha-D-manno-heptose 7-phosphate + D-glycero-beta-D-manno-heptose 7-phosphate. It functions in the pathway carbohydrate biosynthesis; D-glycero-D-manno-heptose 7-phosphate biosynthesis; D-glycero-alpha-D-manno-heptose 7-phosphate and D-glycero-beta-D-manno-heptose 7-phosphate from sedoheptulose 7-phosphate: step 1/1. Functionally, catalyzes the isomerization of sedoheptulose 7-phosphate in D-glycero-D-manno-heptose 7-phosphate. In Proteus mirabilis (strain HI4320), this protein is Phosphoheptose isomerase.